The following is a 200-amino-acid chain: Early E1A 21 kDa protein (200 aa).

The disordered stretch occupies residues 78–98 (QDSTTATSAEEPSASTDSISS). Positions 114–118 (LRCYE) match the LXCXE motif, interaction with host RB1 motif. Residues 136–151 (CSTCGGHEVNGFCSLC) fold into a zinc finger. The Nuclear localization signal signature appears at 196–200 (SRHDE).

As to quaternary structure, interaction with host RB1 induces the aberrant dissociation of RB1-E2F1 complex thereby disrupting RB1's activity.

Its function is as follows. E1A protein has both transforming and trans-activating activities. Plays a role in viral genome replication by driving entry of quiescent cells into the cell cycle. Disrupts the function of host retinoblastoma protein RB1/pRb and isoform early E1A 26 kDa protein stabilizes TP53, which are key regulators of the cell cycle. Induces the disassembly of the E2F1 transcription factors from RB1 by direct competition for the same binding site on RB1, with subsequent transcriptional activation of E2F1-regulated S-phase genes. Inactivation of the ability of RB1 to arrest the cell cycle is critical for cellular transformation, uncontrolled cellular growth and proliferation induced by viral infection. Stimulation of progression from G1 to S phase allows the virus to efficiently use the cellular DNA replicating machinery to achieve viral genome replication. In Murine adenovirus A serotype 1 (MAdV-1), this protein is Early E1A 21 kDa protein.